Here is a 173-residue protein sequence, read N- to C-terminus: Ribosome maturation factor RimM (173 aa).

The PRC barrel domain maps to 94–168; the sequence is SNESYLCDLL…LIRINPPKGL (75 aa).

It belongs to the RimM family. In terms of assembly, binds ribosomal protein uS19.

It is found in the cytoplasm. An accessory protein needed during the final step in the assembly of 30S ribosomal subunit, possibly for assembly of the head region. Essential for efficient processing of 16S rRNA. May be needed both before and after RbfA during the maturation of 16S rRNA. It has affinity for free ribosomal 30S subunits but not for 70S ribosomes. This is Ribosome maturation factor RimM from Lawsonia intracellularis (strain PHE/MN1-00).